Reading from the N-terminus, the 103-residue chain is Cell division protein FtsB (103 aa).

Topologically, residues 1–3 are cytoplasmic; the sequence is MGK. A helical transmembrane segment spans residues 4 to 21; that stretch reads LTLLLLALLVWLQYSLWF. Over 22-103 the chain is Periplasmic; it reads GKNGIHDYSR…RAGGPAQNNR (82 aa). The stretch at 38–62 forms a coiled coil; sequence VQQATNAKLKARNDQLFAEIDDLNG.

It belongs to the FtsB family. Part of a complex composed of FtsB, FtsL and FtsQ.

The protein localises to the cell inner membrane. Its function is as follows. Essential cell division protein. May link together the upstream cell division proteins, which are predominantly cytoplasmic, with the downstream cell division proteins, which are predominantly periplasmic. In Cronobacter sakazakii (strain ATCC BAA-894) (Enterobacter sakazakii), this protein is Cell division protein FtsB.